Consider the following 113-residue polypeptide: Protein AV2 (113 aa).

A disordered region spans residues Ser-94 to Val-113.

The protein belongs to the geminiviridae protein AV2/V2 family. As to quaternary structure, interacts with host SGS3.

The protein localises to the host cytoplasm. Its subcellular location is the host perinuclear region. In terms of biological role, through its interaction with host SGS3, acts as a suppressor of RNA-mediated gene silencing, also known as post-transcriptional gene silencing (PTGS), a mechanism of plant viral defense that limits the accumulation of viral RNAs. This African cassava mosaic virus (isolate West Kenyan 844) (ACMV) protein is Protein AV2.